The sequence spans 278 residues: DNA adenine methylase (278 aa).

Residues Trp-10, Lys-14, Asp-54, and Asp-181 each coordinate S-adenosyl-L-methionine.

Belongs to the N(4)/N(6)-methyltransferase family.

It catalyses the reaction a 2'-deoxyadenosine in DNA + S-adenosyl-L-methionine = an N(6)-methyl-2'-deoxyadenosine in DNA + S-adenosyl-L-homocysteine + H(+). An alpha subtype methylase, recognizes the double-stranded sequence 5'-GATC-3' and methylates A-2. May be involved in methyl-directed DNA mismatch repair, initiation of chromosome replication and gene expression. This is DNA adenine methylase (dam) from Escherichia coli O157:H7.